The following is a 354-amino-acid chain: MISLKNDTFLRALLKQPVEYTPIWMMRQAGRYLPEYKATRAKAGSFLDLCKNTELATEVTIQPLERFDLDAAILFSDILTVPDAMGLGLYFAEGEGPKFKRALQHEADIAKLHVPDMEKLQYVFDAVTSIRKALDGRVPLIGFSGSPFTLACYMVEGGGSKEFRTIKTMMYSRPDLLHKILDTNAQAVTAYLNAQIDAGAQAVQIFDTWGGVLSDAAFKEFSLKYIRQIVAGLKRESEGRRVPVIVFAKGGGLWLESMAQIGADALGLDWTCNIGEARRRVGKQVALQGNFDPFALFGTPESIRTEVARILADYGHGSGHVFNLGHGINQHADPEHAKILVDTVHELSRQYHGG.

Residues 27–31, phenylalanine 46, aspartate 77, tyrosine 153, threonine 208, and histidine 326 contribute to the substrate site; that span reads RQAGR.

The protein belongs to the uroporphyrinogen decarboxylase family. As to quaternary structure, homodimer.

Its subcellular location is the cytoplasm. The enzyme catalyses uroporphyrinogen III + 4 H(+) = coproporphyrinogen III + 4 CO2. It functions in the pathway porphyrin-containing compound metabolism; protoporphyrin-IX biosynthesis; coproporphyrinogen-III from 5-aminolevulinate: step 4/4. In terms of biological role, catalyzes the decarboxylation of four acetate groups of uroporphyrinogen-III to yield coproporphyrinogen-III. The chain is Uroporphyrinogen decarboxylase from Neisseria meningitidis serogroup B (strain ATCC BAA-335 / MC58).